Reading from the N-terminus, the 1141-residue chain is MAYKDARQVKIAEKLVILNDRAAGMMTRIYNIKKSSGDSKVKPQFLSDKKMEGAIKHIVRKFPVVDCRSNSSTFEYVQEKSTEITKSLSLYYYTFADILDLKDHIMQVLTTMESCQCQLDVTLNYDLTTSYLNLVVHLVTMMILLSRIEDRKAVLGLFNAAYDLQHGQSEASFPRLGQMILDYENPLKKLHEDLGPLNRLIYSALSSVTHTYQRRNKTADSWRTSNVFSLTAAPAQILYAAQTETIACEYLSLDVIDRWIVFCGTVCHSTLLNDDNIRHMWQLALQMNLCLRVFRDETFIVHQEIQAFLESSKEKSKRLQDVKDAFNHASVTAVAVHADRRRFLRSSLRELSLLLRDQPGLLGPKILYVWMALGAGRDEVIWLLRHQVEVPAISKKGSRMVEELVDRQLPELLFYMLELRDLVTKYYAVIQRYYLQYVSSYDSIVVSEEINQANGLTQEEAVLLTDFANEIGNINSDTDLRALRLDWFRFQAWTSAARSHFQLSRHKKLAIYMNTSVFHLKMIDLQDEMLRETSDLSLYCFYPKLAEKHWLNCLQLPAQARYVLSFARLAAHFTSALHDMCPEEKAFITEKALAQCNSVIEETCKQLSYILEKVAEHEFGLAYQMTPSAVAVRVVAQVVQQKGSGKAAAAAAAAARDYFIAGEESYRVDRQALTMPDKLQTTLLEISAALGAHRQIYVADHTFAPRTYLAQSLETKFVELLHGMFWEGQPHASNPKRPSEMLLALQAYMTVLQNLDTAISVDISNTMQTTLLQQTQLVDSKNKDTIAALYTKWYLEVLLRRASSGHMVWSEHLRTMLSSGQEQLSFMPDHYSDPQELRALVQIIGPYGVKLMTERLIWHVASQIMEMSKIVATYKDALQIARSNFDNAEKMKDVLNLLSVEPKDKKTPNATCAADAILQRTIIIGQICLFRDALHDALRHIVESKLPFLQASFDMLYHNLDDVDKVKIGEMSAAMGVTGPVDMSLVNAVRAQNPNIHPQEHYVNSCLLMVAVAICIPRIGMSDLSSYKPSIQASLNNSHCVPMAINTIGSALFHLHEQNDIQSRMKEFLALASSGILRTIHERDNSRQISDDVLRSHTTLYIILEQMVRKNRWLSMDVLETCFPYNLVRTAYQQCYEADAQ.

Belongs to the HEM-1/HEM-2 family. Interacts with aco-1, gei-13 and gex-2. Interacts with gex-3. As to expression, expressed in neurons.

The protein localises to the cytoplasm. Rac effector required for tissue morphogenesis, cell migrations and egg laying. May play a role in egg laying and in yolk protein clatherin-mediated endocytosis by oocytes during oogenesis. Plays a role in the formation of gap junctions between EA and EP endodermal precursor cells in embryos. The polypeptide is Membrane-associated protein gex-3 (Caenorhabditis elegans).